A 311-amino-acid chain; its full sequence is Thioredoxin reductase (311 aa).

35 to 42 provides a ligand contact to FAD; that stretch reads ERGIPGGQ. A disulfide bridge connects residues cysteine 134 and cysteine 137. 277-286 is a binding site for FAD; sequence DVRDKGLRQI.

Belongs to the class-II pyridine nucleotide-disulfide oxidoreductase family. As to quaternary structure, homodimer. FAD is required as a cofactor.

The protein localises to the cytoplasm. The enzyme catalyses [thioredoxin]-dithiol + NADP(+) = [thioredoxin]-disulfide + NADPH + H(+). The sequence is that of Thioredoxin reductase (trxB) from Staphylococcus aureus (strain MRSA252).